Consider the following 485-residue polypeptide: N-succinylglutamate 5-semialdehyde dehydrogenase 2 (485 aa).

221-226 lines the NAD(+) pocket; it reads GSAAAG. Residues E244 and C279 contribute to the active site.

Belongs to the aldehyde dehydrogenase family. AstD subfamily.

It catalyses the reaction N-succinyl-L-glutamate 5-semialdehyde + NAD(+) + H2O = N-succinyl-L-glutamate + NADH + 2 H(+). The protein operates within amino-acid degradation; L-arginine degradation via AST pathway; L-glutamate and succinate from L-arginine: step 4/5. Catalyzes the NAD-dependent reduction of succinylglutamate semialdehyde into succinylglutamate. The protein is N-succinylglutamate 5-semialdehyde dehydrogenase 2 of Caulobacter vibrioides (strain ATCC 19089 / CIP 103742 / CB 15) (Caulobacter crescentus).